Reading from the N-terminus, the 274-residue chain is 4-deoxy-L-threo-5-hexosulose-uronate ketol-isomerase (274 aa).

His192, His194, Glu199, and His241 together coordinate Zn(2+).

This sequence belongs to the KduI family. Zn(2+) serves as cofactor.

The catalysed reaction is 5-dehydro-4-deoxy-D-glucuronate = 3-deoxy-D-glycero-2,5-hexodiulosonate. The protein operates within glycan metabolism; pectin degradation; 2-dehydro-3-deoxy-D-gluconate from pectin: step 4/5. Functionally, catalyzes the isomerization of 5-dehydro-4-deoxy-D-glucuronate to 3-deoxy-D-glycero-2,5-hexodiulosonate. This is 4-deoxy-L-threo-5-hexosulose-uronate ketol-isomerase from Cereibacter sphaeroides (strain ATCC 17029 / ATH 2.4.9) (Rhodobacter sphaeroides).